We begin with the raw amino-acid sequence, 1253 residues long: Elongator complex protein 1 (1253 aa).

The tract at residues 830-1253 is mediates dimerization; it reads VDVNMLFDHA…KPFEKLSILI (424 aa). Positions 1126–1141 are enriched in polar residues; that stretch reads YTKSSNSSKMTRNTSK. The segment at 1126–1153 is disordered; sequence YTKSSNSSKMTRNTSKNNRRLERKRARG. The interval 1137–1155 is required for binding to tRNA; the sequence is RNTSKNNRRLERKRARGKK. The segment covering 1142–1153 has biased composition (basic residues); it reads NNRRLERKRARG.

The protein belongs to the ELP1/IKA1 family. Homodimer. Component of the elongator complex.

The protein localises to the cytoplasm. It participates in tRNA modification; 5-methoxycarbonylmethyl-2-thiouridine-tRNA biosynthesis. Its function is as follows. Component of the elongator complex, a multiprotein complex which is required for multiple tRNA modifications, including mcm5U (5-methoxycarbonylmethyl uridine), mcm5s2U (5-methoxycarbonylmethyl-2-thiouridine), and ncm5U (5-carbamoylmethyl uridine). The elongator complex catalyzes formation of carboxymethyluridine in the wobble base at position 34 in tRNAs. ELP1 binds to tRNA, mediating interaction of the elongator complex with tRNA. In Schizosaccharomyces pombe (strain 972 / ATCC 24843) (Fission yeast), this protein is Elongator complex protein 1.